The primary structure comprises 260 residues: Proteasome subunit alpha (260 aa).

Belongs to the peptidase T1A family. In terms of assembly, the 20S proteasome core is composed of 14 alpha and 14 beta subunits that assemble into four stacked heptameric rings, resulting in a barrel-shaped structure. The two inner rings, each composed of seven catalytic beta subunits, are sandwiched by two outer rings, each composed of seven alpha subunits. The catalytic chamber with the active sites is on the inside of the barrel. Has a gated structure, the ends of the cylinder being occluded by the N-termini of the alpha-subunits. Is capped at one or both ends by the proteasome regulatory ATPase, PAN.

Its subcellular location is the cytoplasm. The formation of the proteasomal ATPase PAN-20S proteasome complex, via the docking of the C-termini of PAN into the intersubunit pockets in the alpha-rings, triggers opening of the gate for substrate entry. Interconversion between the open-gate and close-gate conformations leads to a dynamic regulation of the 20S proteasome proteolysis activity. Functionally, component of the proteasome core, a large protease complex with broad specificity involved in protein degradation. This Thermococcus gammatolerans (strain DSM 15229 / JCM 11827 / EJ3) protein is Proteasome subunit alpha.